A 359-amino-acid polypeptide reads, in one-letter code: Membrane-bound lytic murein transglycosylase C (359 aa).

Residues 1 to 16 (MKKYLALALIAPLLIS) form the signal peptide. Residue Cys17 is the site of N-palmitoyl cysteine attachment. Cys17 carries S-diacylglycerol cysteine lipidation.

The protein belongs to the transglycosylase Slt family.

The protein resides in the cell outer membrane. It catalyses the reaction Exolytic cleavage of the (1-&gt;4)-beta-glycosidic linkage between N-acetylmuramic acid (MurNAc) and N-acetylglucosamine (GlcNAc) residues in peptidoglycan, from either the reducing or the non-reducing ends of the peptidoglycan chains, with concomitant formation of a 1,6-anhydrobond in the MurNAc residue.. Functionally, murein-degrading enzyme. May play a role in recycling of muropeptides during cell elongation and/or cell division. This is Membrane-bound lytic murein transglycosylase C from Escherichia coli O8 (strain IAI1).